The chain runs to 116 residues: Ribonuclease T (116 aa).

Residues 18 to 99 (KRAILVGHNS…YDTEKTAELF (82 aa)) form the Exonuclease domain. H86 functions as the Proton donor/acceptor in the catalytic mechanism.

The protein belongs to the RNase T family. As to quaternary structure, homodimer.

Its function is as follows. Trims short 3' overhangs of a variety of RNA species, leaving a one or two nucleotide 3' overhang. Responsible for the end-turnover of tRNA: specifically removes the terminal AMP residue from uncharged tRNA (tRNA-C-C-A). Also appears to be involved in tRNA biosynthesis. This chain is Ribonuclease T, found in Azotobacter vinelandii.